We begin with the raw amino-acid sequence, 202 residues long: MSDFIVGLTGGIASGKSALAAEFEKLGVPVIDADVIARQVAEPGPILDAIAAYFGDSVLLPDGTLNRQALRYRVFADTAQRQALEAITHPAIRRELQRAALAAQGPYAIVAIPLLAEAGGRATYPWLDRILVVDVPVALQHERLMQRDGATAELADRMITAQATREKRLAIADEVVCNHGVLKQLSQAARRLDADYRARANP.

The region spanning 5-202 (IVGLTGGIAS…DADYRARANP (198 aa)) is the DPCK domain. 13-18 (ASGKSA) contacts ATP.

It belongs to the CoaE family.

The protein resides in the cytoplasm. It catalyses the reaction 3'-dephospho-CoA + ATP = ADP + CoA + H(+). It participates in cofactor biosynthesis; coenzyme A biosynthesis; CoA from (R)-pantothenate: step 5/5. Catalyzes the phosphorylation of the 3'-hydroxyl group of dephosphocoenzyme A to form coenzyme A. This Xanthomonas axonopodis pv. citri (strain 306) protein is Dephospho-CoA kinase.